The primary structure comprises 313 residues: Leucine-rich repeat-containing protein 52 (313 aa).

The N-terminal stretch at Met1–Gly23 is a signal peptide. The 30-residue stretch at Ser24–Leu53 folds into the LRRNT domain. Topologically, residues Ser24–Asp244 are extracellular. 2 disulfides stabilise this stretch: Cys26-Cys32 and Cys30-Cys39. LRR repeat units lie at residues Asn54 to Leu75, Asp78 to Gly99, Lys102 to Val123, Asn126 to Asn148, and Ser151 to His172. Residues Asn112 and Asn148 are each glycosylated (N-linked (GlcNAc...) asparagine). The LRRCT domain maps to Asn184–Thr238. 2 cysteine pairs are disulfide-bonded: Cys188–Cys214 and Cys190–Cys236. Residues Asn189 and Asn211 are each glycosylated (N-linked (GlcNAc...) asparagine). The helical transmembrane segment at Tyr245–Leu265 threads the bilayer. Residues Thr266–Ile313 lie on the Cytoplasmic side of the membrane.

As to quaternary structure, may interact with KCNU1; this interaction may be required for LRRC52 stability and may change the channel gating properties. Interacts with KCNMA1. In terms of processing, N-glycosylated. Mainly expressed in testis and skeletal muscle.

The protein localises to the cell membrane. Its function is as follows. Auxiliary protein of the large-conductance, voltage and calcium-activated potassium channel (BK alpha). Modulates gating properties by producing a marked shift in the BK channel's voltage dependence of activation in the hyperpolarizing direction, and in the absence of calcium. KCNU1 channel auxiliary protein. Modulates KCNU1 gating properties. This Homo sapiens (Human) protein is Leucine-rich repeat-containing protein 52 (LRRC52).